The following is a 427-amino-acid chain: MSNIQTGAERMPHDLSHLGFLAGQIGRLITISTTPVIAGDSFEMDAVGALRLSPLRRGLAIDSTVDIFTFYVPHRHVYGEQWIKFMKDGVNATPLPTVNTTGYIDHAAFLGTINPDTNKIPKHLFQGYLNIYNNYFKAPWMPDRTEANPNELNQDDARYGFRCCHLKNIWTAPLPPETELSRQMTTSTTSIDIMGLQAAYANLHTDQERDYFMQRYHDVISSFGGKTSYDADNRPLLVMRSNLWASGYDVDGTDQTSLGQFSGRVQQTYKHSVPRFFVPEHGTMFTLALVRFPPTATKEIQYLNAKGALTYTDIAGDPVLYGNLPPREISMKDVFRSGDSSKKFKIAEGQWYRYAPSYVSPAYHLLEGFPFIQEPPSGDLQERVLIRHHDYDQCFQSVQLLQWNSQVKFNVTVYRNLPTTRDSIMTS.

This sequence belongs to the microviridae F protein family. As to quaternary structure, pentamerizes and interacts with H protein, G and B pentamers to form 12S pre-assembly complex. By binding with protein D, induces joining of twelve 12S complex to form the procapsid. The procapsid has an external scaffold made of 240 copies of protein D, 60 copies of the internally located B protein, and contains 60 copies of each of the viral structural proteins F and G. Upon genome packaging, interacts with protein J. The mature virion is composed of 60 copies each of the F, G, and J proteins, and 12 copies of the H protein.

It is found in the virion. In terms of biological role, assembles to form an icosahedral capsid with a T=1 symmetry, about 30 nm in diameter, and consisting of 60 capsid proteins F. Upon virus binding to host cell, one of the spikes dissociates from the capsid and the virus interacts with LPS through the exposed EF loops on the F proteins. After the genome had been ejected, the channel formed by the F proteins at the unique fivefold axis remains open. The chain is Capsid protein F (F) from Enterobacteria phage phiX174 (Isolate Sanger).